The sequence spans 277 residues: Large ribosomal subunit protein uL2 (277 aa).

2 stretches are compositionally biased toward basic residues: residues 210–219 (RARWAGKRPQ) and 259–277 (TRSKKARSNKFIVRSRNKK). Positions 210 to 277 (RARWAGKRPQ…KFIVRSRNKK (68 aa)) are disordered.

This sequence belongs to the universal ribosomal protein uL2 family. Part of the 50S ribosomal subunit. Forms a bridge to the 30S subunit in the 70S ribosome.

Its function is as follows. One of the primary rRNA binding proteins. Required for association of the 30S and 50S subunits to form the 70S ribosome, for tRNA binding and peptide bond formation. It has been suggested to have peptidyltransferase activity; this is somewhat controversial. Makes several contacts with the 16S rRNA in the 70S ribosome. This is Large ribosomal subunit protein uL2 from Ligilactobacillus salivarius (strain UCC118) (Lactobacillus salivarius).